Here is a 248-residue protein sequence, read N- to C-terminus: Adenosylcobinamide-GDP ribazoletransferase (248 aa).

A run of 7 helical transmembrane segments spans residues 24-44 (EINLKKGSALLPFVGVIIGAW), 70-90 (IIITGGFHVDALADTADGLFS), 106-126 (VGANGVIAICFYFLFYGSLFL), 134-154 (IGWLFFVLPIVAKGVTMLLFA), 168-188 (IFLGVPWWPVVIAQVIVLVAL), 189-209 (GAFFSYIGVIAYAGVILFTII), and 228-248 (AGGQMGQLICLFCLVLLWGLI).

It belongs to the CobS family. The cofactor is Mg(2+).

It is found in the cell membrane. The enzyme catalyses alpha-ribazole + adenosylcob(III)inamide-GDP = adenosylcob(III)alamin + GMP + H(+). It carries out the reaction alpha-ribazole 5'-phosphate + adenosylcob(III)inamide-GDP = adenosylcob(III)alamin 5'-phosphate + GMP + H(+). Its pathway is cofactor biosynthesis; adenosylcobalamin biosynthesis; adenosylcobalamin from cob(II)yrinate a,c-diamide: step 7/7. Functionally, joins adenosylcobinamide-GDP and alpha-ribazole to generate adenosylcobalamin (Ado-cobalamin). Also synthesizes adenosylcobalamin 5'-phosphate from adenosylcobinamide-GDP and alpha-ribazole 5'-phosphate. In Listeria monocytogenes serotype 4b (strain F2365), this protein is Adenosylcobinamide-GDP ribazoletransferase.